Here is a 108-residue protein sequence, read N- to C-terminus: Cytochrome c6 (108 aa).

An N-terminal signal peptide occupies residues methionine 1–alanine 23. Heme c-binding residues include cysteine 37, cysteine 40, histidine 41, and methionine 81.

It belongs to the cytochrome c family. PetJ subfamily. Monomer. In terms of processing, binds 1 heme c group covalently per subunit.

The protein localises to the plastid. It localises to the chloroplast thylakoid lumen. In terms of biological role, functions as an electron carrier between membrane-bound cytochrome b6-f and photosystem I in oxygenic photosynthesis. The chain is Cytochrome c6 from Gracilaria tenuistipitata var. liui (Red alga).